Reading from the N-terminus, the 445-residue chain is Phosphoglucosamine mutase (445 aa).

Residue Ser102 is the Phosphoserine intermediate of the active site. Positions 102, 241, 243, and 245 each coordinate Mg(2+). Ser102 is modified (phosphoserine).

The protein belongs to the phosphohexose mutase family. The cofactor is Mg(2+). In terms of processing, activated by phosphorylation.

It catalyses the reaction alpha-D-glucosamine 1-phosphate = D-glucosamine 6-phosphate. Its function is as follows. Catalyzes the conversion of glucosamine-6-phosphate to glucosamine-1-phosphate. The sequence is that of Phosphoglucosamine mutase from Rhodococcus opacus (strain B4).